The chain runs to 471 residues: Putative multidrug resistance protein MdtD (471 aa).

A run of 13 helical transmembrane segments spans residues 12-32 (LWIVAFGFFMQALDTTIVNTA), 49-69 (MVIVSYVLTVAVMLPASGWLA), 77-97 (IFFTAIVLFTLGSLFCAQSST), 106-126 (VLQGIGGAMMVPVGRLTVMKI), 138-158 (FVTLPGQVGPLLGPALGGLLV), 165-185 (WIFLINLPVGIAGAAATLWLM), 197-217 (FSGFLLLAFGMAALTIALDGY), 225-245 (AGLGALVAGGSAATLLYLWHA), 263-285 (FSLGLFGSLCGRIGSGMLPFMTP), 290-312 (IGLGFSPFHAGLMMMPMVLGSMG), 342-362 (LLFMGVALAGWYWLLPVVMLF), 396-416 (MVMQLSMSLGVSIAGLLLGAF), and 431-451 (IFFWTYLCMALIIALPALVFA).

This sequence belongs to the major facilitator superfamily. TCR/Tet family.

It is found in the cell inner membrane. The sequence is that of Putative multidrug resistance protein MdtD from Cronobacter sakazakii (strain ATCC BAA-894) (Enterobacter sakazakii).